The sequence spans 436 residues: Prenyltransferase nscD (436 aa).

This sequence belongs to the tryptophan dimethylallyltransferase family.

Its pathway is secondary metabolite biosynthesis. In terms of biological role, prenyltransferase; part of the gene cluster that mediates the biosynthesis of neosartoricin B, a prenylated anthracenone that probably exhibits T-cell antiproliferative activity, suggestive of a physiological role as an immunosuppressive agent. The non-reducing polyketide synthase nscA probably synthesizes and cyclizes the decaketide backbone. The hydrolase nscB then mediates the product release through hydrolysis followed by spontaneous decarboxylation. The prenyltransferase nscD catalyzes the addition of the dimethylallyl group to the aromatic C5. The FAD-dependent monooxygenase nscC is then responsible for the stereospecific hydroxylation at C2. Neosartoricin B can be converted into two additional compounds neosartoricins C and D. Neosartoricin C is a spirocyclic compound that is cyclized through the attack of C3 hydroxyl on C14, followed by dehydration. On the other hand, neosartoricin D is a further cyclized compound in which attack of C2 on C14 in neosartoricin C results in the formation of the acetal-containing dioxabicyclo-octanone ring. Both of these compounds are novel and possibly represent related metabolites of the gene cluster. The polypeptide is Prenyltransferase nscD (Trichophyton equinum (strain ATCC MYA-4606 / CBS 127.97) (Horse ringworm fungus)).